The sequence spans 296 residues: 33 kDa chaperonin (296 aa).

Cystine bridges form between Cys-238–Cys-240 and Cys-271–Cys-274.

The protein belongs to the HSP33 family. Post-translationally, under oxidizing conditions two disulfide bonds are formed involving the reactive cysteines. Under reducing conditions zinc is bound to the reactive cysteines and the protein is inactive.

The protein localises to the cytoplasm. Its function is as follows. Redox regulated molecular chaperone. Protects both thermally unfolding and oxidatively damaged proteins from irreversible aggregation. Plays an important role in the bacterial defense system toward oxidative stress. The protein is 33 kDa chaperonin of Clostridium botulinum (strain ATCC 19397 / Type A).